A 157-amino-acid chain; its full sequence is Peptide methionine sulfoxide reductase MsrA (157 aa).

Cys-13 is an active-site residue.

Belongs to the MsrA Met sulfoxide reductase family.

The catalysed reaction is L-methionyl-[protein] + [thioredoxin]-disulfide + H2O = L-methionyl-(S)-S-oxide-[protein] + [thioredoxin]-dithiol. It carries out the reaction [thioredoxin]-disulfide + L-methionine + H2O = L-methionine (S)-S-oxide + [thioredoxin]-dithiol. In terms of biological role, has an important function as a repair enzyme for proteins that have been inactivated by oxidation. Catalyzes the reversible oxidation-reduction of methionine sulfoxide in proteins to methionine. The chain is Peptide methionine sulfoxide reductase MsrA from Methanococcus maripaludis (strain C5 / ATCC BAA-1333).